The chain runs to 608 residues: Serine/threonine-protein kinase SSN3 (608 aa).

Residues 1 to 72 are disordered; sequence MSYSSASFRK…PGTVGTRTSI (72 aa). Residues 17–47 are compositionally biased toward low complexity; that stretch reads SQPSQTTTTTTSANQPQSQSQQQPLQQSQQQ. Basic residues predominate over residues 49–59; sequence LHMKPNPHIPH. The Protein kinase domain occupies 104–492; it reads YQIMGYIAAG…ADQALLHPYF (389 aa). ATP-binding positions include 110-118 and lysine 182; that span reads IAAGTYGKV. Aspartate 307 serves as the catalytic Proton acceptor. The disordered stretch occupies residues 523 to 608; that stretch reads MTTAANNNNN…LPGGIRKKRG (86 aa). Positions 528-583 are enriched in low complexity; the sequence is NNNNNNNNNNNNNNNNNNNNNNNNNNNSGHQLSQQQNVQIQQVHQMQQQIHSQQLQ.

The protein belongs to the protein kinase superfamily. CMGC Ser/Thr protein kinase family. CDC2/CDKX subfamily. In terms of assembly, component of the SRB8-11 complex, a regulatory module of the Mediator complex. Mg(2+) serves as cofactor.

Its subcellular location is the nucleus. It catalyses the reaction L-seryl-[protein] + ATP = O-phospho-L-seryl-[protein] + ADP + H(+). The catalysed reaction is L-threonyl-[protein] + ATP = O-phospho-L-threonyl-[protein] + ADP + H(+). The enzyme catalyses [DNA-directed RNA polymerase] + ATP = phospho-[DNA-directed RNA polymerase] + ADP + H(+). In terms of biological role, component of the SRB8-11 complex. The SRB8-11 complex is a regulatory module of the Mediator complex which is itself involved in regulation of basal and activated RNA polymerase II-dependent transcription. The SRB8-11 complex may be involved in the transcriptional repression of a subset of genes regulated by Mediator. It may inhibit the association of the Mediator complex with RNA polymerase II to form the holoenzyme complex. The SRB8-11 complex phosphorylates the C-terminal domain (CTD) of the largest subunit of RNA polymerase II. This chain is Serine/threonine-protein kinase SSN3 (SSN3), found in Candida albicans (strain SC5314 / ATCC MYA-2876) (Yeast).